A 109-amino-acid chain; its full sequence is MASVVTKKSKKSGDTINAKLALTMKSGKYVLGYKSTLKTLRSGKAKLILIAGNCPPLRKSELEYYAMLSKANVHHYAGTNIDLGTACGKLFRVGVLAITDAGDSDILDA.

It belongs to the eukaryotic ribosomal protein eL30 family. In terms of assembly, component of the large ribosomal subunit (LSU). Mature yeast ribosomes consist of a small (40S) and a large (60S) subunit. The 40S small subunit contains 1 molecule of ribosomal RNA (18S rRNA) and at least 33 different proteins. The large 60S subunit contains 3 rRNA molecules (25S, 5.8S and 5S rRNA) and at least 46 different proteins.

It localises to the cytoplasm. Its function is as follows. Component of the ribosome, a large ribonucleoprotein complex responsible for the synthesis of proteins in the cell. The small ribosomal subunit (SSU) binds messenger RNAs (mRNAs) and translates the encoded message by selecting cognate aminoacyl-transfer RNA (tRNA) molecules. The large subunit (LSU) contains the ribosomal catalytic site termed the peptidyl transferase center (PTC), which catalyzes the formation of peptide bonds, thereby polymerizing the amino acids delivered by tRNAs into a polypeptide chain. The nascent polypeptides leave the ribosome through a tunnel in the LSU and interact with protein factors that function in enzymatic processing, targeting, and the membrane insertion of nascent chains at the exit of the ribosomal tunnel. This is Large ribosomal subunit protein eL30A (rpl3001) from Schizosaccharomyces pombe (strain 972 / ATCC 24843) (Fission yeast).